Consider the following 278-residue polypeptide: 2-dehydro-3-deoxyphosphooctonate aldolase (278 aa).

This sequence belongs to the KdsA family.

Its subcellular location is the cytoplasm. It catalyses the reaction D-arabinose 5-phosphate + phosphoenolpyruvate + H2O = 3-deoxy-alpha-D-manno-2-octulosonate-8-phosphate + phosphate. It functions in the pathway carbohydrate biosynthesis; 3-deoxy-D-manno-octulosonate biosynthesis; 3-deoxy-D-manno-octulosonate from D-ribulose 5-phosphate: step 2/3. The protein operates within bacterial outer membrane biogenesis; lipopolysaccharide biosynthesis. This is 2-dehydro-3-deoxyphosphooctonate aldolase from Bartonella tribocorum (strain CIP 105476 / IBS 506).